A 281-amino-acid chain; its full sequence is Glyceraldehyde dehydrogenase medium chain (281 aa).

Positions 1-176 (MYPPEFSYVR…TQIEVPVLDG (176 aa)) constitute an FAD-binding PCMH-type domain. FAD contacts are provided by residues 31–35 (AGGQS) and 110–114 (TIGGA).

In terms of assembly, heterotrimer composed of a large chain (CutA), a medium chain (CutB) and a small chain (CutC). It depends on FAD as a cofactor.

Its subcellular location is the cytoplasm. The catalysed reaction is D-glyceraldehyde + A + H2O = (R)-glycerate + AH2 + H(+). Its function is as follows. Component of the glyceraldehyde dehydrogenase which is involved the nonphosphorylated Entner-Doudoroff pathway. Catalyzes the oxidation of D-glyceraldehyde to yield glycerate. When the artificial electron acceptor 2,6-dichlorophenol-indophenol (Cl2Ind) is used, the enzyme shows a broad substrate range (glyceraldehyde-3-phosphate, formaldehyde, acetaldehyde, propionaldehyde and isobutyraldehyde), but is most active with D-glyceraldehyde. It is not known which acceptor is utilized in vivo. This is Glyceraldehyde dehydrogenase medium chain (cutB) from Sulfolobus acidocaldarius (strain ATCC 33909 / DSM 639 / JCM 8929 / NBRC 15157 / NCIMB 11770).